Reading from the N-terminus, the 329-residue chain is MTLRNDWTREEIQALYEQPFLDLVFKAQQVHREHFTANTIQVSTLLSIKTGKCPEDCKYCSQSAHYDSKLEAEKRIAVEKVISEAKAAKDSGSSRFCMGAAWRNPHERDMPYVLEMVREVKALGMETCMTLGMLNQSQAERLKDAGLDYYNHNLDTSRKYYSHIISTRTFDDRLNTLDYVRQAGMKVCSGGIVGLGESREDRIGLLHELATLPIHPESVPINMLVPIEGTPLADVEKLDVIEWIRTIAVARIIMPHSYIRLSAGRESLSDSDQALAFMAGANSLFSGDKLLTTPNAGEGKDQALFNKLGLTAEKPKPTVSDLSVDAMSA.

The region spanning 38–262 (NTIQVSTLLS…IMPHSYIRLS (225 aa)) is the Radical SAM core domain. Positions 53, 57, and 60 each coordinate [4Fe-4S] cluster. [2Fe-2S] cluster-binding residues include C97, C128, C188, and R260.

This sequence belongs to the radical SAM superfamily. Biotin synthase family. As to quaternary structure, homodimer. The cofactor is [4Fe-4S] cluster. [2Fe-2S] cluster is required as a cofactor.

It carries out the reaction (4R,5S)-dethiobiotin + (sulfur carrier)-SH + 2 reduced [2Fe-2S]-[ferredoxin] + 2 S-adenosyl-L-methionine = (sulfur carrier)-H + biotin + 2 5'-deoxyadenosine + 2 L-methionine + 2 oxidized [2Fe-2S]-[ferredoxin]. The protein operates within cofactor biosynthesis; biotin biosynthesis; biotin from 7,8-diaminononanoate: step 2/2. In terms of biological role, catalyzes the conversion of dethiobiotin (DTB) to biotin by the insertion of a sulfur atom into dethiobiotin via a radical-based mechanism. The polypeptide is Biotin synthase (Acinetobacter baumannii (strain SDF)).